Here is a 151-residue protein sequence, read N- to C-terminus: Cytochrome c-type biogenesis protein CcmE (151 aa).

Residues 1–8 lie on the Cytoplasmic side of the membrane; sequence MNPQRKKR. Residues 9–29 traverse the membrane as a helical; Signal-anchor for type II membrane protein segment; it reads LFLILGLLAGVAVAVGFALSA. Residues 30-151 lie on the Periplasmic side of the membrane; it reads LQQNINLFYT…QAASGAEAKP (122 aa). Residues histidine 124 and tyrosine 128 each coordinate heme.

This sequence belongs to the CcmE/CycJ family.

The protein localises to the cell inner membrane. Heme chaperone required for the biogenesis of c-type cytochromes. Transiently binds heme delivered by CcmC and transfers the heme to apo-cytochromes in a process facilitated by CcmF and CcmH. This Pseudomonas putida (strain W619) protein is Cytochrome c-type biogenesis protein CcmE.